The sequence spans 227 residues: MQQQHLMQMNQNMMGGYTSPAAVTTDLIQQYLDENKQLILAILDNQNNGKAEECERHQAKLQHNLMYLAAIADSQPPQTAPLSQYPSNLMMQPGPRYMPPQSGQMMNPQSLMAARSSMMYAHPSLSPLQQQQAAHGQLGMAPGGGGGGTTSGFSILHGEASMGGGGAGAGAGNNMMNAGMFSGFGRSGSGAKEGSTSLSVDVRGGTSSGAQSGDGEYLKVGTEEEGS.

The segment at 186 to 227 (RSGSGAKEGSTSLSVDVRGGTSSGAQSGDGEYLKVGTEEEGS) is disordered.

Belongs to the SS18 family. As to quaternary structure, interacts with several GRFs. Interacts with GRF10. Interacts with GRF1. Expressed in shoots, aerial roots, ears and tassels. Expressed in the shoot apical meristem (SAM), young leaf primordia, leaf margins, inflorescence meristem, floral meristem and spikelet meristem.

Transcription coactivator that plays a role in the regulation of meristematic function in leaves, stems and inflorescences. Regulates shoot architecture and meristem determinacy. Binds to the inflorescence architecture gene UB3 (unbranched3). Regulates the expression of several genes involved in inflorescence architecture. Component of a network formed by the microRNA396 (miRNA396), the GRFs and their interacting factors (GIFs) acting in the regulation of meristem function, at least partially through the control of cell proliferation. Associates with the core SWI/SNF chromatin-remodeling complex and specific GRFs to tightly regulate the transition between cell division and cell expansion in growing leaves. The chain is GRF-interacting factor 1 from Zea mays (Maize).